A 155-amino-acid chain; its full sequence is Endoribonuclease YbeY (155 aa).

Zn(2+) contacts are provided by His-114, His-118, and His-124.

This sequence belongs to the endoribonuclease YbeY family. It depends on Zn(2+) as a cofactor.

It is found in the cytoplasm. Functionally, single strand-specific metallo-endoribonuclease involved in late-stage 70S ribosome quality control and in maturation of the 3' terminus of the 16S rRNA. The sequence is that of Endoribonuclease YbeY from Citrobacter koseri (strain ATCC BAA-895 / CDC 4225-83 / SGSC4696).